Here is a 379-residue protein sequence, read N- to C-terminus: Cytochrome b (379 aa).

A run of 4 helical transmembrane segments spans residues 33-53 (FGSL…FLAM), 77-98 (WTIR…FIHV), 113-133 (WNVG…GYVL), and 178-198 (FFAL…IHLL). Residues His83 and His97 each contribute to the heme b site. Heme b is bound by residues His182 and His196. An a ubiquinone-binding site is contributed by His201. 4 helical membrane-spanning segments follow: residues 226–246 (TKDF…ALFY), 288–308 (LGGV…PFLQ), 320–340 (LSQF…WIGG), and 347–367 (FINI…FIMP).

The protein belongs to the cytochrome b family. In terms of assembly, the cytochrome bc1 complex contains 11 subunits: 3 respiratory subunits (MT-CYB, CYC1 and UQCRFS1), 2 core proteins (UQCRC1 and UQCRC2) and 6 low-molecular weight proteins (UQCRH/QCR6, UQCRB/QCR7, UQCRQ/QCR8, UQCR10/QCR9, UQCR11/QCR10 and a cleavage product of UQCRFS1). This cytochrome bc1 complex then forms a dimer. It depends on heme b as a cofactor.

It localises to the mitochondrion inner membrane. Its function is as follows. Component of the ubiquinol-cytochrome c reductase complex (complex III or cytochrome b-c1 complex) that is part of the mitochondrial respiratory chain. The b-c1 complex mediates electron transfer from ubiquinol to cytochrome c. Contributes to the generation of a proton gradient across the mitochondrial membrane that is then used for ATP synthesis. The protein is Cytochrome b (MT-CYB) of Lepilemur sahamalazensis (Sahamalaza sportive lemur).